A 589-amino-acid polypeptide reads, in one-letter code: Cyclohexane-1,2-dione hydrolase (589 aa).

Residue Glu-52 coordinates thiamine diphosphate. The thiamine pyrophosphate binding stretch occupies residues 400-480 (NHTLPMFGGA…VITMVFTNES (81 aa)). Mg(2+) contacts are provided by Asp-451 and Asn-478.

It belongs to the TPP enzyme family. As to quaternary structure, homodimer. Requires Mg(2+) as cofactor. The cofactor is thiamine diphosphate. FAD is required as a cofactor.

It carries out the reaction cyclohexan-1,2-dione + H2O = 6-oxohexanoate + H(+). Functionally, catalyzes the ring-opening cleavage of the alicyclic alcohol cyclohexane-1,2-dione. The sequence is that of Cyclohexane-1,2-dione hydrolase from Azoarcus sp.